The primary structure comprises 262 residues: Hemin import ATP-binding protein HmuV (262 aa).

Positions 3 to 244 (LQARNLTLAR…DHMRRVYGIE (242 aa)) constitute an ABC transporter domain. 35–42 (GANGAGKS) is a binding site for ATP.

It belongs to the ABC transporter superfamily. Heme (hemin) importer (TC 3.A.1.14.5) family. As to quaternary structure, the complex is composed of two ATP-binding proteins (HmuV), two transmembrane proteins (HmuU) and a solute-binding protein (HmuT).

The protein localises to the cell inner membrane. Part of the ABC transporter complex HmuTUV involved in hemin import. Responsible for energy coupling to the transport system. This chain is Hemin import ATP-binding protein HmuV, found in Bordetella bronchiseptica (strain ATCC BAA-588 / NCTC 13252 / RB50) (Alcaligenes bronchisepticus).